A 1733-amino-acid chain; its full sequence is MVGQQYSSAPLRTVKEVQFGLFSPEEVRAISVAKIRFPETMDETQTRAKIGGLNDPRLGSIDRNLKCQTCQEGMNECPGHFGHIDLAKPVFHVGFIAKIKKVCECVCMHCGKLLLDEHNELMRQALAIKDSKKRFAAIWTLCKTKMVCETDVPSEDDPTQLVSRGGCGNTQPTIRKDGLKLVGSWKKDRATGDADEPELRVLSTEEILNIFKHISVKDFTSLGFNEVFSRPEWMILTCLPVPPPPVRPSISFNESQRGEDDLTFKLADILKANISLETLEHNGAPHHAIEEAESLLQFHVATYMDNDIAGQPQALQKSGRPVKSIRARLKGKEGRIRGNLMGKRVDFSARTVISGDPNLELDQVGVPKSIAKTLTYPEVVTPYNIDRLTQLVRNGPNEHPGAKYVIRDSGDRIDLRYSKRAGDIQLQYGWKVERHIMDNDPVLFNRQPSLHKMSMMAHRVKVIPYSTFRLNLSVTSPYNADFDGDEMNLHVPQSEETRAELSQLCAVPLQIVSPQSNKPCMGIVQDTLCGIRKLTLRDTFIELDQVLNMLYWVPDWDGVIPTPAIIKPKPLWSGKQILSVAIPNGIHLQRFDEGTTLLSPKDNGMLIIDGQIIFGVVEKKTVGSSNGGLIHVVTREKGPQVCAKLFGNIQKVVNFWLLHNGFSTGIGDTIADGPTMREITETIAEAKKKVLDVTKEAQANLLTAKHGMTLRESFEDNVVRFLNEARDKAGRLAEVNLKDLNNVKQMVMAGSKGSFINIAQMSACVGQQSVEGKRIAFGFVDRTLPHFSKDDYSPESKGFVENSYLRGLTPQEFFFHAMGGREGLIDTAVKTAETGYIQRRLVKALEDIMVHYDNTTRNSLGNVIQFIYGEDGMDAAHIEKQSLDTIGGSDAAFEKRYRVDLLNTDHTLDPSLLESGSEILGDLKLQVLLDEEYKQLVKDRKFLREVFVDGEANWPLPVNIRRIIQNAQQTFHIDHTKPSDLTIKDIVLGVKDLQENLLVLRGKNEIIQNAQRDAVTLFCCLLRSRLATRRVLQEYRLTKQAFDWVLSNIEAQFLRSVVHPGEMVGVLAAQSIGEPATQMTLNTFHFAGVASKKVTSGVPRLKEILNVAKNMKTPSLTVYLEPGHAADQEQAKLIRSAIEHTTLKSVTIASEIYYDPDPRSTVIPEDEEIIQLHFSLLDEEAEQSFDQQSPWLLRLELDRAAMNDKDLTMGQVGERIKQTFKNDLFVIWSEDNDEKLIIRCRVVRPKSLDAETEAEEDHMLKKIENTMLENITLRGVENIERVVMMKYDRKVPSPTGEYVKEPEWVLETDGVNLSEVMTVPGIDPTRIYTNSFIDIMEVLGIEAGRAALYKEVYNVIASDGSYVNYRHMALLVDVMTTQGGLTSVTRHGFNRSNTGALMRCSFEETVEILFEAGASAELDDCRGVSENVILGQMAPIGTGAFDVMIDEESLVKYMPEQKITEIEDGQDGGVTPYSNESGLVNADLDVKDELMFSPLVDSGSNDAMAGGFTAYGGADYGEATSPFGAYGEAPTSPGFGVSSPGFSPTSPTYSPTSPAYSPTSPSYSPTSPSYSPTSPSYSPTSPSYSPTSPSYSPTSPSYSPTSPSYSPTSPSYSPTSPSYSPTSPSYSPTSPSYSPTSPSYSPTSPSYSPTSPSYSPTSPAYSPTSPSYSPTSPSYSPTSPSYSPTSPSYSPTSPNYSPTSPSYSPTSPGYSPGSPAYSPKQDEQKHNENENSR.

Positions 67, 70, 77, 80, 107, 110, 148, and 167 each coordinate Zn(2+). Residues proline 248–aspartate 260 are lid loop. A rudder loop region spans residues asparagine 306–lysine 323. The Mg(2+) site is built by aspartate 481, aspartate 483, and aspartate 485. Residue lysine 695 forms a Glycyl lysine isopeptide (Lys-Gly) (interchain with G-Cter in ubiquitin) linkage. Positions proline 810–glutamate 822 are bridging helix. Glycyl lysine isopeptide (Lys-Gly) (interchain with G-Cter in ubiquitin) cross-links involve residues lysine 1246 and lysine 1350. Threonine 1471 carries the phosphothreonine modification. A disordered region spans residues valine 1537–arginine 1733. Low complexity predominate over residues serine 1538 to proline 1719. 23 consecutive repeat copies span residues tyrosine 1549–alanine 1555, tyrosine 1556–serine 1562, tyrosine 1563–serine 1569, tyrosine 1570–serine 1576, tyrosine 1577–serine 1583, tyrosine 1584–serine 1590, tyrosine 1591–serine 1597, tyrosine 1598–serine 1604, tyrosine 1605–serine 1611, tyrosine 1612–serine 1618, tyrosine 1619–serine 1625, tyrosine 1626–serine 1632, tyrosine 1633–serine 1639, tyrosine 1640–serine 1646, tyrosine 1647–serine 1653, tyrosine 1654–alanine 1660, tyrosine 1661–serine 1667, tyrosine 1668–serine 1674, tyrosine 1675–serine 1681, tyrosine 1682–serine 1688, tyrosine 1689–asparagine 1695, tyrosine 1696–serine 1702, and tyrosine 1703–glycine 1709. The C-terminal domain (CTD); 24 X 7 AA approximate tandem repeats of Y-S-P-T-S-P-[A-S-N-G] stretch occupies residues tyrosine 1549 to alanine 1716. One copy of the 24; approximate repeat lies at tyrosine 1710–alanine 1716. Residues lysine 1720–arginine 1733 are compositionally biased toward basic and acidic residues.

The protein belongs to the RNA polymerase beta' chain family. In terms of assembly, component of the RNA polymerase II (Pol II) complex consisting of 12 subunits. Interacts with DEF1; the interaction is direct and serves to bridge RPB1 to the Elongin complex in a DNA-damaged dependent manner. Interacts with the Elongin subunit ELA1. Interacts with the Elongin subunit ELC1. Interacts with ASK10. Interacts with ESS1. Interacts with RTT103. Interacts with SHE2. Post-translationally, the tandem 7 residues repeats in the C-terminal domain (CTD) can be highly phosphorylated. The phosphorylation activates Pol II. Phosphorylation occurs mainly at residues 'Ser-2' and 'Ser-5' of the heptapeptide repeat. The phosphorylated form of Pol II appears to carry, on average, one phosphate per repeat. The phosphorylation state is believed to result from the balanced action of site-specific CTD kinases and phosphatases, and a 'CTD code' that specifies the position of Pol II within the transcription cycle has been proposed. Phosphorylation at 'Ser-5' occurs in promoter-proximal regions in early elongation. Phosphorylation at 'Ser-2' predominates in regions more distal to the promoter and triggers binding of the 3' RNA processing machinery. CTD kinases include KIN28 (as part of the TFKII complex, a subcomplex of the TFIIH holo complex), SSN3/SRB10 (as part of the SRB8-11 complex, a module of the Mediator complex), CTK1 (as part of CTD kinase), and probably BUR1 (as part of the BUR1-BUR2 kinase complex). Phosphatases include FCP1 and SSU72. In terms of processing, following transcription stress, the elongating form of RNA polymerase II (RNA pol IIo) is polyubiquitinated via 'Lys-63'-linkages on Lys-1246 by the RSP5-UBA1-UBC5 complex at DNA damage sites without leading to degradation: ubiquitination promotes RNA pol IIo backtracking to allow access by the transcription-coupled nucleotide excision repair (TC-NER) machinery. Subsequent DEF1-dependent polyubiquitination by the elongin complex via 'Lys-48'-linkages may lead to proteasome-mediated degradation; presumably at stalled RNA pol II where TC-NER has failed, to halt global transcription and enable 'last resort' DNA repair pathways.

Its subcellular location is the nucleus. It carries out the reaction RNA(n) + a ribonucleoside 5'-triphosphate = RNA(n+1) + diphosphate. In terms of biological role, DNA-dependent RNA polymerase catalyzes the transcription of DNA into RNA using the four ribonucleoside triphosphates as substrates. Largest and catalytic component of RNA polymerase II which synthesizes mRNA precursors and many functional non-coding RNAs. Forms the polymerase active center together with the second largest subunit. Pol II is the central component of the basal RNA polymerase II transcription machinery. During a transcription cycle, Pol II, general transcription factors and the Mediator complex assemble as the preinitiation complex (PIC) at the promoter. 11-15 base pairs of DNA surrounding the transcription start site are melted and the single-stranded DNA template strand of the promoter is positioned deeply within the central active site cleft of Pol II to form the open complex. After synthesis of about 30 bases of RNA, Pol II releases its contacts with the core promoter and the rest of the transcription machinery (promoter clearance) and enters the stage of transcription elongation in which it moves on the template as the transcript elongates. Pol II appears to oscillate between inactive and active conformations at each step of nucleotide addition. Elongation is influenced by the phosphorylation status of the C-terminal domain (CTD) of Pol II largest subunit (RPB1), which serves as a platform for assembly of factors that regulate transcription initiation, elongation, termination and mRNA processing. Pol II is composed of mobile elements that move relative to each other. The core element with the central large cleft comprises RPB3, RBP10, RPB11, RPB12 and regions of RPB1 and RPB2 forming the active center. The clamp element (portions of RPB1, RPB2 and RPB3) is connected to the core through a set of flexible switches and moves to open and close the cleft. A bridging helix emanates from RPB1 and crosses the cleft near the catalytic site and is thought to promote translocation of Pol II by acting as a ratchet that moves the RNA-DNA hybrid through the active site by switching from straight to bent conformations at each step of nucleotide addition. In elongating Pol II, the lid loop (RPB1) appears to act as a wedge to drive apart the DNA and RNA strands at the upstream end of the transcription bubble and guide the RNA strand toward the RNA exit groove located near the base of the largely unstructured CTD domain of RPB1. The rudder loop (RPB1) interacts with single-stranded DNA after separation from the RNA strand, likely preventing reassociation with the exiting RNA. The cleft is surrounded by jaws: an upper jaw formed by portions of RBP1, RPB2 and RPB9, and a lower jaw, formed by RPB5 and portions of RBP1. The jaws are thought to grab the incoming DNA template, mainly by RPB5 direct contacts to DNA. This is DNA-directed RNA polymerase II subunit RPB1 (RPO21) from Saccharomyces cerevisiae (strain ATCC 204508 / S288c) (Baker's yeast).